The chain runs to 906 residues: Protein translocase subunit SecA (906 aa).

Residues Gln-89, 107-111 (GEGKT), and Asp-502 each bind ATP. Zn(2+) is bound by residues Cys-885, Cys-887, Cys-896, and His-897.

The protein belongs to the SecA family. Monomer and homodimer. Part of the essential Sec protein translocation apparatus which comprises SecA, SecYEG and auxiliary proteins SecDF-YajC and YidC. Zn(2+) is required as a cofactor.

Its subcellular location is the cell inner membrane. It is found in the cytoplasm. It carries out the reaction ATP + H2O + cellular proteinSide 1 = ADP + phosphate + cellular proteinSide 2.. Functionally, part of the Sec protein translocase complex. Interacts with the SecYEG preprotein conducting channel. Has a central role in coupling the hydrolysis of ATP to the transfer of proteins into and across the cell membrane, serving both as a receptor for the preprotein-SecB complex and as an ATP-driven molecular motor driving the stepwise translocation of polypeptide chains across the membrane. This Rhizobium rhizogenes (strain K84 / ATCC BAA-868) (Agrobacterium radiobacter) protein is Protein translocase subunit SecA.